The primary structure comprises 218 residues: Calcineurin B-like protein 5 (218 aa).

EF-hand domains are found at residues 35 to 69 (EVEALYDLFRKLSNSIIKDGLIHKEEFHLALFRNK), 70 to 105 (KTNLFVDRVFDLFDQKGNGVIEFDEFVRSLSVFHPD), 107 to 142 (PEEQKAGFAFKLYDLRQTGFIERHELKEMVLALLDE), and 151 to 186 (AVEMIVDRTFDQADTKGDERIDQEEWNEFVKNNPYV).

The protein belongs to the calcineurin regulatory subunit family. As to quaternary structure, homodimer. In terms of tissue distribution, expressed at low levels in roots, shoots, culms, leaves and young spikelets.

Functionally, acts as a calcium sensor. CBL proteins interact with CIPK serine-threonine protein kinases. Binding of a CBL protein to the regulatory NAF domain of a CIPK protein lead to the activation of the kinase in a calcium-dependent manner. This is Calcineurin B-like protein 5 (CBL5) from Oryza sativa subsp. japonica (Rice).